The sequence spans 324 residues: Hydroxyacylglutathione hydrolase 2, mitochondrial (324 aa).

The N-terminal 64 residues, 1-64 (MQTISKASSA…KSIRVSKFCS (64 aa)), are a transit peptide targeting the mitochondrion. Zn(2+) contacts are provided by histidine 124 and histidine 126. Residues aspartate 128 and histidine 129 each contribute to the Fe cation site. Zn(2+) is bound by residues histidine 182 and aspartate 201. Aspartate 201 and histidine 239 together coordinate Fe cation.

This sequence belongs to the metallo-beta-lactamase superfamily. Glyoxalase II family. In terms of assembly, monomer. It depends on Fe(3+) as a cofactor. The cofactor is Fe(2+). Requires Zn(2+) as cofactor.

The protein localises to the mitochondrion. It carries out the reaction an S-(2-hydroxyacyl)glutathione + H2O = a 2-hydroxy carboxylate + glutathione + H(+). It functions in the pathway secondary metabolite metabolism; methylglyoxal degradation; (R)-lactate from methylglyoxal: step 2/2. Its function is as follows. Thiolesterase that catalyzes the hydrolysis of S-D-lactoyl-glutathione to form glutathione and D-lactic acid. This Arabidopsis thaliana (Mouse-ear cress) protein is Hydroxyacylglutathione hydrolase 2, mitochondrial.